We begin with the raw amino-acid sequence, 166 residues long: Large ribosomal subunit protein uL10 (166 aa).

The protein belongs to the universal ribosomal protein uL10 family. In terms of assembly, part of the ribosomal stalk of the 50S ribosomal subunit. The N-terminus interacts with L11 and the large rRNA to form the base of the stalk. The C-terminus forms an elongated spine to which L12 dimers bind in a sequential fashion forming a multimeric L10(L12)X complex.

Its function is as follows. Forms part of the ribosomal stalk, playing a central role in the interaction of the ribosome with GTP-bound translation factors. This Neisseria gonorrhoeae (strain ATCC 700825 / FA 1090) protein is Large ribosomal subunit protein uL10.